Reading from the N-terminus, the 305-residue chain is Glycine--tRNA ligase alpha subunit (305 aa).

It belongs to the class-II aminoacyl-tRNA synthetase family. Tetramer of two alpha and two beta subunits.

It localises to the cytoplasm. The enzyme catalyses tRNA(Gly) + glycine + ATP = glycyl-tRNA(Gly) + AMP + diphosphate. This Vibrio campbellii (strain ATCC BAA-1116) protein is Glycine--tRNA ligase alpha subunit.